The sequence spans 360 residues: DNA replication and repair protein RecF (360 aa).

30 to 37 contributes to the ATP binding site; it reads GQNGSGKT.

Belongs to the RecF family.

It is found in the cytoplasm. In terms of biological role, the RecF protein is involved in DNA metabolism; it is required for DNA replication and normal SOS inducibility. RecF binds preferentially to single-stranded, linear DNA. It also seems to bind ATP. The chain is DNA replication and repair protein RecF from Shewanella baltica (strain OS185).